Consider the following 274-residue polypeptide: Penicillin-insensitive murein endopeptidase (274 aa).

An N-terminal signal peptide occupies residues 1–19 (MKKTAIALLAWFVSSASLA). Cystine bridges form between Cys-44/Cys-265, Cys-187/Cys-235, and Cys-216/Cys-223. Residues His-110, His-113, Asp-120, Asp-147, His-150, and His-211 each contribute to the Zn(2+) site. Residues 225–274 (DQPLPPPGDGCGAELQSWFEPPKPGTTKPEKKTPPPLPPSCQALLDEHVL) are disordered.

This sequence belongs to the peptidase M74 family. Dimer. Zn(2+) serves as cofactor.

It localises to the periplasm. Functionally, murein endopeptidase that cleaves the D-alanyl-meso-2,6-diamino-pimelyl amide bond that connects peptidoglycan strands. Likely plays a role in the removal of murein from the sacculus. The sequence is that of Penicillin-insensitive murein endopeptidase from Salmonella paratyphi A (strain AKU_12601).